The primary structure comprises 573 residues: Estrogen receptor beta (573 aa).

The modulating stretch occupies residues 15–170 (QEVDSSKVGE…CFAGKGDMHF (156 aa)). NR C4-type zinc fingers lie at residues 171–191 (CAVCHDYASGYHYGVWSCEGC) and 207–231 (CPATNQCTIDKNRRKSCQACRLRKC). The nuclear receptor DNA-binding region spans 171–236 (CAVCHDYASG…RLRKCYEVGM (66 aa)). An NR LBD domain is found at 291–527 (TPEQLINRII…DLLLEMLDAN (237 aa)). Low complexity-rich tracts occupy residues 534–552 (MSASYSSQPSPWSQAAQSQ) and 559–573 (CSGECPCPPKESSTI). The segment at 534–573 (MSASYSSQPSPWSQAAQSQPGPPPSCSGECPCPPKESSTI) is disordered.

The protein belongs to the nuclear hormone receptor family. NR3 subfamily. In terms of assembly, binds DNA as a homodimer. Can form a heterodimer with ER-alpha. As to expression, liver.

It localises to the nucleus. In terms of biological role, binds estrogens with an affinity similar to that of ER-alpha, and activates expression of reporter genes containing estrogen response elements (ERE) in an estrogen-dependent manner. The sequence is that of Estrogen receptor beta (esr2) from Anguilla japonica (Japanese eel).